A 1416-amino-acid polypeptide reads, in one-letter code: DNA-directed RNA polymerase subunit beta (1416 aa).

The protein belongs to the RNA polymerase beta chain family. In terms of assembly, in plastids the minimal PEP RNA polymerase catalytic core is composed of four subunits: alpha, beta, beta', and beta''. When a (nuclear-encoded) sigma factor is associated with the core the holoenzyme is formed, which can initiate transcription.

It localises to the plastid. The protein localises to the chloroplast. The enzyme catalyses RNA(n) + a ribonucleoside 5'-triphosphate = RNA(n+1) + diphosphate. In terms of biological role, DNA-dependent RNA polymerase catalyzes the transcription of DNA into RNA using the four ribonucleoside triphosphates as substrates. The sequence is that of DNA-directed RNA polymerase subunit beta from Oltmannsiellopsis viridis (Marine flagellate).